A 466-amino-acid polypeptide reads, in one-letter code: Coagulation factor VII (466 aa).

The first 20 residues, M1–A20, serve as a signal peptide directing secretion. Residues A21–R60 constitute a propeptide that is removed on maturation. Residues A61–S105 form the Gla domain. 4-carboxyglutamate is present on residues E66, E67, E74, E76, E79, E80, E85, E86, E89, and E95. Residues C77 and C82 are joined by a disulfide bond. The EGF-like 1; calcium-binding domain maps to D106–E142. 10 cysteine pairs are disulfide-bonded: C110–C121, C115–C130, C132–C141, C151–C162, C158–C172, C174–C187, C195–C322, C219–C224, C238–C254, and C370–C389. O-linked (Glc...) serine; alternate glycosylation occurs at S112. S112 is a glycosylation site (O-linked (Xyl...) serine; alternate). O-linked (Fuc) serine glycosylation occurs at S120. Position 123 is a (3R)-3-hydroxyaspartate (D123). Residues D147–T188 enclose the EGF-like 2 domain. N205 carries an N-linked (GlcNAc...) asparagine glycan. The Peptidase S1 domain occupies I213–R452. Active-site charge relay system residues include H253 and D302. N382 carries an N-linked (GlcNAc...) asparagine glycan. D398 serves as a coordination point for substrate. C400 and C428 are joined by a disulfide. The active-site Charge relay system is S404.

This sequence belongs to the peptidase S1 family. Heterodimer of a light chain and a heavy chain linked by a disulfide bond. Post-translationally, the vitamin K-dependent, enzymatic carboxylation of some glutamate residues allows the modified protein to bind calcium. The iron and 2-oxoglutarate dependent 3-hydroxylation of aspartate and asparagine is (R) stereospecific within EGF domains. In terms of processing, O-glycosylated. O-fucosylated by POFUT1 on a conserved serine or threonine residue found in the consensus sequence C2-X(4,5)-[S/T]-C3 of EGF domains, where C2 and C3 are the second and third conserved cysteines. Post-translationally, can be either O-glucosylated or O-xylosylated at Ser-112 by POGLUT1.

It is found in the secreted. The enzyme catalyses Selective cleavage of Arg-|-Ile bond in factor X to form factor Xa.. In terms of biological role, initiates the extrinsic pathway of blood coagulation. Serine protease that circulates in the blood in a zymogen form. Factor VII is converted to factor VIIa by factor Xa, factor XIIa, factor IXa, or thrombin by minor proteolysis. In the presence of tissue factor and calcium ions, factor VIIa then converts factor X to factor Xa by limited proteolysis. Factor VIIa also converts factor IX to factor IXa in the presence of tissue factor and calcium. This chain is Coagulation factor VII (F7), found in Pan paniscus (Pygmy chimpanzee).